A 597-amino-acid polypeptide reads, in one-letter code: Protein unc-93 homolog B1 (597 aa).

Residues 1–29 (MEAEPPLYPMAGAAGPQGDEDLLGVPDGP) form a disordered region. 5 helical membrane-spanning segments follow: residues 64-84 (VLAASAGGMLTYGVYLGLLQM), 110-130 (KMLMGINVTPIAALLYTPVLI), 132-152 (FFGTKWMMFLAVGIYALFVST), 160-180 (TLVPSAVALGMAIVPLWASMG), and 223-243 (IFYSFFHLSFACAQLPMIYFL). N-linked (GlcNAc...) asparagine glycans are attached at residues N251 and N272. 5 consecutive transmembrane segments (helical) span residues 285–305 (LIVVESVLMAVAFLAMLLVLG), 343–363 (LVPFFIYSGFEVLFACTGIAL), 378–398 (LLVAYSLGASAASLLGLLGLW), 403–423 (VPLVAGAGVHLLLTFILFFWA), and 428–448 (VLQHSWILYVAAALWGVGSAL). Residue N449 is glycosylated (N-linked (GlcNAc...) asparagine). 2 consecutive transmembrane segments (helical) span residues 469 to 489 (FIFTIYHWWQAVAIFTVYLGS) and 491 to 511 (LHMKAKLAVLLVTLVAAAVSY). Positions 522–597 (VAPRQPRIPR…AQGGDGPEEQ (76 aa)) are disordered. A phosphoserine mark is found at S547 and S550.

It belongs to the unc-93 family. As to quaternary structure, interacts with TLR3, TLR5, TLR7, and TLR9 (probably via transmembrane domain). N-glycosylated. As to expression, expressed in plasmocytoid dendritic cells (at protein level). Highly expressed in antigen-presenting cells. Expressed in heart, and at lower level in kidney. Expressed at low level in other tissues.

The protein localises to the endoplasmic reticulum membrane. It is found in the endosome. It localises to the lysosome. Its subcellular location is the cytoplasmic vesicle. The protein resides in the phagosome. In terms of biological role, plays an important role in innate and adaptive immunity by regulating nucleotide-sensing Toll-like receptor (TLR) signaling. Required for the transport of a subset of TLRs (including TLR3, TLR7 and TLR9) from the endoplasmic reticulum to endolysosomes where they can engage pathogen nucleotides and activate signaling cascades. May play a role in autoreactive B-cells removal. This chain is Protein unc-93 homolog B1, found in Homo sapiens (Human).